Here is a 381-residue protein sequence, read N- to C-terminus: 4-hydroxy-3-methylbut-2-en-1-yl diphosphate synthase (flavodoxin) (381 aa).

The [4Fe-4S] cluster site is built by Cys280, Cys283, Cys315, and Glu322.

Belongs to the IspG family. [4Fe-4S] cluster serves as cofactor.

The enzyme catalyses (2E)-4-hydroxy-3-methylbut-2-enyl diphosphate + oxidized [flavodoxin] + H2O + 2 H(+) = 2-C-methyl-D-erythritol 2,4-cyclic diphosphate + reduced [flavodoxin]. The protein operates within isoprenoid biosynthesis; isopentenyl diphosphate biosynthesis via DXP pathway; isopentenyl diphosphate from 1-deoxy-D-xylulose 5-phosphate: step 5/6. In terms of biological role, converts 2C-methyl-D-erythritol 2,4-cyclodiphosphate (ME-2,4cPP) into 1-hydroxy-2-methyl-2-(E)-butenyl 4-diphosphate. This Clavibacter sepedonicus (Clavibacter michiganensis subsp. sepedonicus) protein is 4-hydroxy-3-methylbut-2-en-1-yl diphosphate synthase (flavodoxin).